Consider the following 380-residue polypeptide: Cytochrome b (380 aa).

4 helical membrane-spanning segments follow: residues F33–M53, W77–I98, W113–L133, and F178–L198. Heme b is bound by residues H83 and H97. 2 residues coordinate heme b: H182 and H196. A ubiquinone is bound at residue H201. A run of 4 helical transmembrane segments spans residues Y226–S246, L288–H308, I320–G340, and F347–P367.

The protein belongs to the cytochrome b family. The cytochrome bc1 complex contains 3 respiratory subunits (MT-CYB, CYC1 and UQCRFS1), 2 core proteins (UQCRC1 and UQCRC2) and probably 6 low-molecular weight proteins. Heme b is required as a cofactor.

The protein localises to the mitochondrion inner membrane. Functionally, component of the ubiquinol-cytochrome c reductase complex (complex III or cytochrome b-c1 complex) that is part of the mitochondrial respiratory chain. The b-c1 complex mediates electron transfer from ubiquinol to cytochrome c. Contributes to the generation of a proton gradient across the mitochondrial membrane that is then used for ATP synthesis. The protein is Cytochrome b (mt-cyb) of Dactyloptena peterseni (Starry flying gurnard).